Here is a 269-residue protein sequence, read N- to C-terminus: Basic leucine zipper 19 (269 aa).

The bZIP domain maps to 140-196; sequence DPKRVKRILANRQSAQRSRVRKLQYISELERSVTTLQMEVSALSPRVAFLDHQRSLL. The basic motif stretch occupies residues 142-161; that stretch reads KRVKRILANRQSAQRSRVRK. A leucine-zipper region spans residues 168 to 196; sequence LERSVTTLQMEVSALSPRVAFLDHQRSLL.

Expressed in roots and shoots.

It localises to the nucleus. In terms of biological role, transcription regulator. The chain is Basic leucine zipper 19 (BZIP19) from Oryza sativa subsp. japonica (Rice).